Reading from the N-terminus, the 480-residue chain is MSDLNTKNVGKISQIIGPVLDIAFGQGQVPNIYNALTIKAKNAAGLEMSVTCEVQQLLGDSCVRAVAMNPTDGLMRGMEVLDTGKPLNVPVGKSTLGRIFNVLGEPVDNLGPVKNEESLPIHRTAPAFVDLDTRLSIFETGIKVVDLLAPYRRGGKIGLFGGAGVGKTVLIMELINNIAKAHGGVSVFAGVGERTREGNDLYTEMKESGVIVEKNLIDSKVALVYGQMNEPPGARMRVALTALTMAEYFRDVNKQDVLFFIDNIFRFVQAGAEVSALLGRMPSAVGYQPTLATEMGALQERITSTKDGSITSIQAVYVPADDLTDPAPATTFAHLDATTVLSRGLASKGIYPAVDPLDSTSTMLQPWILGEKHYGCAQSVKRTLQRYKELQDIIAILGLDELSEEDRLVVARARKIERFLSQPFFVAEVFTGSPGKYVSLAETIEGFNKILAGELDDLPEQAFYLVGNINEALTKAASMK.

ATP is bound at residue 161–168 (GGAGVGKT).

It belongs to the ATPase alpha/beta chains family. F-type ATPases have 2 components, CF(1) - the catalytic core - and CF(0) - the membrane proton channel. CF(1) has five subunits: alpha(3), beta(3), gamma(1), delta(1), epsilon(1). CF(0) has four main subunits: a(1), b(1), b'(1) and c(9-12).

It is found in the plastid. Its subcellular location is the chloroplast thylakoid membrane. It catalyses the reaction ATP + H2O + 4 H(+)(in) = ADP + phosphate + 5 H(+)(out). Its function is as follows. Produces ATP from ADP in the presence of a proton gradient across the membrane. The catalytic sites are hosted primarily by the beta subunits. In Tetradesmus obliquus (Green alga), this protein is ATP synthase subunit beta, chloroplastic.